A 295-amino-acid chain; its full sequence is Non-selective voltage-gated ion channel VDAC2 (295 aa).

Residues K24 and K32 each coordinate ATP. K32 carries the N6-acetyllysine; alternate modification. Residue K32 is modified to N6-succinyllysine; alternate. A Glycyl lysine isopeptide (Lys-Gly) (interchain with G-Cter in ubiquitin); alternate cross-link involves residue K32. 2 consecutive transmembrane segments (beta stranded) span residues L38–S47 and V51–S59. K65 participates in a covalent cross-link: Glycyl lysine isopeptide (Lys-Gly) (interchain with G-Cter in ubiquitin). Residues V66 to W76 form a beta stranded membrane-spanning segment. Position 79 is a phosphotyrosine (Y79). 3 beta stranded membrane passes run L81 to N88, T92 to D101, and L107 to S116. At T119 the chain carries Phosphothreonine. Residue K121 is modified to N6-acetyllysine; alternate. K121 participates in a covalent cross-link: Glycyl lysine isopeptide (Lys-Gly) (interchain with G-Cter in ubiquitin); alternate. A Glycyl lysine isopeptide (Lys-Gly) (interchain with G-Cter in ubiquitin) cross-link involves residue K122. The next 4 membrane-spanning stretches (beta stranded) occupy residues S123 to R132, I135 to D142, A149 to G157, and L162 to D170. K173 participates in a covalent cross-link: Glycyl lysine isopeptide (Lys-Gly) (interchain with G-Cter in ubiquitin). 6 beta stranded membrane passes run K175 to T187, F190 to N197, E201 to V210, F214 to T223, R230 to L239, and A243 to N250. At Y237 the chain carries Phosphotyrosine. S252 bears the Phosphoserine mark. Residues L254 to G256 and S272 to D276 each bind NAD(+). The next 2 membrane-spanning stretches (beta stranded) occupy residues L254–L263 and G266–V275. K278 is subject to N6-acetyllysine; alternate. A Glycyl lysine isopeptide (Lys-Gly) (interchain with G-Cter in ubiquitin); alternate cross-link involves residue K278. A beta stranded transmembrane segment spans residues H285–E294.

It belongs to the eukaryotic mitochondrial porin family. In terms of assembly, monomer, homodimer and higher order oligomers; formation of higher order structures is necessary for scramblase activity. Interacts with ARMC12 in a TBC1D21-dependent manner. Interacts with KLC3. Interacts with SPATA33. Interacts with PPP3CC in a SPATA33-dependent manner. Post-translationally, ubiquitinated by PRKN during mitophagy, leading to its degradation and enhancement of mitophagy. Deubiquitinated by USP30. As to expression, highly expressed in heart, kidney, brain and ascitic tumor with very low levels in liver. Expressed in the head region of epididymal sperm.

The protein localises to the mitochondrion outer membrane. Its subcellular location is the membrane. The enzyme catalyses chloride(in) = chloride(out). It catalyses the reaction K(+)(in) = K(+)(out). The catalysed reaction is a 1,2-diacyl-sn-glycero-3-phospho-L-serine(in) = a 1,2-diacyl-sn-glycero-3-phospho-L-serine(out). It carries out the reaction a 1,2-diacyl-sn-glycero-3-phosphocholine(in) = a 1,2-diacyl-sn-glycero-3-phosphocholine(out). The enzyme catalyses a 1,2-diacyl-sn-glycero-3-phospho-(1D-myo-inositol)(in) = a 1,2-diacyl-sn-glycero-3-phospho-(1D-myo-inositol)(out). Functionally, non-selective voltage-gated ion channel that mediates the transport of anions and cations through the mitochondrion outer membrane and plasma membrane. The channel adopts an open conformation at zero mV and a closed conformation at both positive and negative potentials. There are two populations of channels; the main that functions in a lower open-state conductance with lower ion selectivity, that switch, in a voltage-dependent manner, from the open to a low-conducting 'closed' state and the other that has a normal ion selectivity in the typical high conductance, 'open' state. Binds various lipids, including the sphingolipid ceramide, the phospholipid phosphatidylcholine, and the sterols cholesterol and oxysterol. Binding of ceramide promotes the mitochondrial outer membrane permeabilization (MOMP) apoptotic pathway. Catalyzes the scrambling of phospholipids across the outer mitochondrial membrane; the mechanism is unrelated to channel activity and is capable of translocating both anionic and zwitterionic phospholipids. This is Non-selective voltage-gated ion channel VDAC2 from Rattus norvegicus (Rat).